A 453-amino-acid polypeptide reads, in one-letter code: GTPase Der (453 aa).

2 EngA-type G domains span residues 4–169 and 178–353; these read PVVA…PPTD and INVA…EQHR. GTP contacts are provided by residues 10 to 17, 57 to 61, 120 to 123, 184 to 191, 231 to 235, and 296 to 299; these read GRPNVGKS, DTGGL, NKCE, DTAGI, and NKWD. Residues 354–439 enclose the KH-like domain; that stretch reads RRVSTSVINE…PIRLLWRGKK (86 aa).

This sequence belongs to the TRAFAC class TrmE-Era-EngA-EngB-Septin-like GTPase superfamily. EngA (Der) GTPase family. As to quaternary structure, associates with the 50S ribosomal subunit.

In terms of biological role, GTPase that plays an essential role in the late steps of ribosome biogenesis. This is GTPase Der from Cyanothece sp. (strain PCC 7425 / ATCC 29141).